Reading from the N-terminus, the 608-residue chain is Replication protein E1 (608 aa).

Residues 83–85 (KRK) carry the Nuclear localization signal motif. Phosphoserine; by host is present on residues serine 88 and serine 96. Residues 148–311 (QGGVGSGHYT…TMIHHQTADS (164 aa)) are DNA-binding region. The SF3 helicase domain occupies 410–560 (LNFIVFLDKF…FPFDANDTPL (151 aa)). 436–443 (GPPDTGKS) is an ATP binding site. A Glycyl lysine isopeptide (Lys-Gly) (interchain with G-Cter in SUMO) cross-link involves residue lysine 517.

It belongs to the papillomaviridae E1 protein family. Can form hexamers. Interacts with E2 protein; this interaction increases E1 DNA binding specificity. Interacts with host DNA polymerase subunit POLA2. Interacts with host single stranded DNA-binding protein RPA1. Interacts with host TOP1; this interaction stimulates the enzymatic activity of TOP1. Phosphorylated. Post-translationally, sumoylated.

The protein localises to the host nucleus. The enzyme catalyses Couples ATP hydrolysis with the unwinding of duplex DNA by translocating in the 3'-5' direction.. The catalysed reaction is ATP + H2O = ADP + phosphate + H(+). In terms of biological role, ATP-dependent DNA 3'-5' helicase required for initiation of viral DNA replication. It forms a complex with the viral E2 protein. The E1-E2 complex binds to the replication origin which contains binding sites for both proteins. During the initial step, a dimer of E1 interacts with a dimer of protein E2 leading to a complex that binds the viral origin of replication with high specificity. Then, a second dimer of E1 displaces the E2 dimer in an ATP-dependent manner to form the E1 tetramer. Following this, two E1 monomers are added to each half of the site, which results in the formation of two E1 trimers on the viral ori. Subsequently, two hexamers will be created. The double hexamer acts as a bi-directional helicase machinery and unwinds the viral DNA and then recruits the host DNA polymerase to start replication. This is Replication protein E1 from Homo sapiens (Human).